The sequence spans 637 residues: DEAD-box ATP-dependent RNA helicase 37 (637 aa).

2 disordered regions span residues 1–68 (MRSS…QPSA) and 86–141 (GPAS…EEAT). 2 stretches are compositionally biased toward low complexity: residues 10 to 28 (ANAE…PVAN) and 46 to 68 (GQAP…QPSA). Residues 104-116 (GGRGGGGGGGGGW) are compositionally biased toward gly residues. The short motif at 174 to 202 (NTFAEIDLGDALNENIRRCKYVKPTPVQR) is the Q motif element. The Helicase ATP-binding domain occupies 205–389 (IPISIAGRDL…SDFLADYIFL (185 aa)). Residue 218–225 (AQTGSGKT) coordinates ATP. Residues 333–336 (DEAD) carry the DEAD box motif. A Helicase C-terminal domain is found at 416–567 (YLMDLLHAQK…EVPQWLERYS (152 aa)). Positions 570 to 610 (SSFGGGGGRNRRSGGARFGGRDFRRDNRGGGGGGYGGGGGG) are disordered. Residues 588-597 (GGRDFRRDNR) show a composition bias toward basic and acidic residues. Positions 598–610 (GGGGGGYGGGGGG) are enriched in gly residues.

This sequence belongs to the DEAD box helicase family. DDX3/DED1 subfamily.

It catalyses the reaction ATP + H2O = ADP + phosphate + H(+). This Oryza sativa subsp. japonica (Rice) protein is DEAD-box ATP-dependent RNA helicase 37 (PL10A).